A 610-amino-acid polypeptide reads, in one-letter code: Menin (610 aa).

The interval 214 to 390 is interaction with FANCD2; it reads GVAERSWLYL…SLLEAGEERP (177 aa). 2 disordered regions span residues 385-404 and 460-552; these read AGEE…GSAL and REAE…PVLT. Residues 393-402 show a composition bias toward low complexity; the sequence is QTQGTQSQGS. Residues 484–500 are compositionally biased toward basic and acidic residues; it reads RRESKPEEPPPPKKPAL. Ser487 is modified (phosphoserine). Pro residues-rich tracts occupy residues 512 to 521 and 537 to 548; these read PGPPRKPPGT and VPAPAASPPPEG. Ser543 is modified (phosphoserine). A Phosphothreonine modification is found at Thr594.

In terms of assembly, component of the MLL-HCF complex, at least composed of KMT2A/MLL1, MEN1, ASH2L, RBBP5, DPY30, WDR5, HCFC1 and HCFC2. Component of the menin-associated histone methyltransferase complex, at least composed of KMT2B/MLL4, MEN1, ASH2L, RBBP5, DPY30 and WDR5. Interacts with POLR2B. Interacts with POLR2A phosphorylated at 'Ser-5', but not with the unphosphorylated, nor 'Ser-2' phosphorylated POLR2A forms. Interacts with FANCD2 and DBF4. Interacts with SMAD3, but not with SMAD2, nor SMAD4. Directly interacts with NFKB1, NFKB2 and RELA. Interacts with JUND (via MBM motif); inhibits the interaction of JUND with MAPK10 and the phosphorylation of JUND by MAP kinases MAPK8 and MAPK10. Interacts with KMT2A (via MBM motif). The KMT2A-MEN1 complex interacts with PSIP1 with a greater affinity as MEN1 enhances interaction of KMT2A with PSIP1.

It is found in the nucleus. Essential component of a MLL/SET1 histone methyltransferase (HMT) complex, a complex that specifically methylates 'Lys-4' of histone H3 (H3K4). Functions as a transcriptional regulator. Binds to the TERT promoter and represses telomerase expression. Plays a role in TGFB1-mediated inhibition of cell-proliferation, possibly regulating SMAD3 transcriptional activity. Represses JUND-mediated transcriptional activation on AP1 sites, as well as that mediated by NFKB subunit RELA. Positively regulates HOXC8 and HOXC6 gene expression. May be involved in normal hematopoiesis through the activation of HOXA9 expression. May be involved in DNA repair. This Bos taurus (Bovine) protein is Menin (MEN1).